Consider the following 392-residue polypeptide: Ribosomal RNA large subunit methyltransferase G (392 aa).

Belongs to the methyltransferase superfamily. RlmG family.

It localises to the cytoplasm. It catalyses the reaction guanosine(1835) in 23S rRNA + S-adenosyl-L-methionine = N(2)-methylguanosine(1835) in 23S rRNA + S-adenosyl-L-homocysteine + H(+). Its function is as follows. Specifically methylates the guanine in position 1835 (m2G1835) of 23S rRNA. This chain is Ribosomal RNA large subunit methyltransferase G, found in Shewanella frigidimarina (strain NCIMB 400).